Here is a 145-residue protein sequence, read N- to C-terminus: Polytheonamide B (145 aa).

A propeptide spanning residues 1-96 (MADSDNTPTS…DDDLDQAAGG (96 aa)) is cleaved from the precursor. Position 97 is a 2-oxo-5,5-dimethylhexanoate (Thr-97). Position 99 is a 3-methylisoleucine (Ile-99). Val-101 carries the 3-methylvaline modification. Val-102 carries the 3-methyl-D-valine modification. At Val-103 the chain carries 3-methylvaline. Ala-104 is subject to D-alanine (Ala). Residue Val-105 is modified to 3-methylvaline. 3-methyl-D-valine is present on residues Val-106 and Val-110. The residue at position 112 (Asn-112) is an N4-methyl-D-asparagine. Thr-113 is modified (3-hydroxyvaline (Thr)). At Val-117 the chain carries 3-methylvaline. Residue Asn-118 is modified to N4-methyl-D-asparagine. Residue Gln-119 is modified to (3S)-3-methylglutamine. The residue at position 120 (Val-120) is a 3-hydroxy-D-valine. Residue Asn-124 is modified to N4-methyl-D-asparagine. Asn-126 carries the post-translational modification (3R)-N4-methyl-3-hydroxy-D-asparagine. Val-127 carries the 3-methylvaline modification. At Val-128 the chain carries 3-hydroxy-D-valine. 2 positions are modified to N4-methyl-D-asparagine: Asn-130 and Asn-132. The residue at position 134 (Asn-134) is a (3R)-N4-methyl-3-hydroxy-D-asparagine. Asn-136 bears the N4-methyl-D-asparagine mark. Ser-138 carries the D-serine (Ser) modification. The residue at position 140 (Asn-140) is a D-asparagine. Met-141 is modified (3,3-dimethylmethionine). Asn-142 bears the D-asparagine mark. Thr-144 is modified (D-threonine).

Post-translationally, epimerization of most, and perhaps all, L- to D-amino acids is catalyzed by PoyD, when PoyA and PoyD are coexpressed in E.coli. N-methylations are catalyzed by PoyE, when PoyA and PoyE are coexpressed in E.coli. In terms of processing, to obtain 2-oxo-5,5-dimethylhexanoate, Thr-97 is firstly dehydrated by PoyF. The second step possibly corresponds to methylation by PoyB/C, and the third step may be a cleavage by PoyH/J.

In terms of biological role, antimicrobial peptide active against Gram-positive bacteria (MIC=4-&gt;125 ug/ml). May act by forming transmembrane ion channels, since the peptide rapidly depolarizes the bacterial cytoplasmic membrane, simultaneously decreasing the membrane potential and intracellular potassium contents. This chain is Polytheonamide B, found in Bacterium symbiont subsp. Theonella swinhoei (strain pTSMAC1).